Consider the following 98-residue polypeptide: Large ribosomal subunit protein uL23 (98 aa).

This sequence belongs to the universal ribosomal protein uL23 family. Part of the 50S ribosomal subunit. Contacts protein L29, and trigger factor when it is bound to the ribosome.

Its function is as follows. One of the early assembly proteins it binds 23S rRNA. One of the proteins that surrounds the polypeptide exit tunnel on the outside of the ribosome. Forms the main docking site for trigger factor binding to the ribosome. The chain is Large ribosomal subunit protein uL23 from Alcanivorax borkumensis (strain ATCC 700651 / DSM 11573 / NCIMB 13689 / SK2).